The primary structure comprises 426 residues: Serine protease HTRA2, mitochondrial (426 aa).

Residues 1–30 (MALRGSHRLDDFIRRCSALTLFHSQAPSRR) constitute a mitochondrion transit peptide. The interval 30–59 (RVSHCGRDRRQQQDPPGQGRQEQQESGGGH) is disordered. A propeptide spanning residues 31-78 (VSHCGRDRRQQQDPPGQGRQEQQESGGGHWSRFGWRSLIRFFVPFSLG) is cleaved from the precursor. Low complexity predominate over residues 42–54 (QDPPGQGRQEQQE). A helical membrane pass occupies residues 68–86 (LIRFFVPFSLGAVASSLVI). Residues 79-82 (AVAS) carry the IAP-binding motif. Residues 143–306 (SNGSGFIIEQ…IPIDYVKVFL (164 aa)) form a serine protease region. Residues H161, D193, and S270 each act as charge relay system in the active site. The PDZ domain occupies 329–414 (MGITMLTLTP…HLDIVILRGV (86 aa)).

This sequence belongs to the peptidase S1C family. In terms of assembly, interacts with th/DIAP1 (via BIR 2 domain).

Its subcellular location is the mitochondrion intermembrane space. The protein localises to the mitochondrion membrane. It catalyses the reaction Cleavage of non-polar aliphatic amino-acids at the P1 position, with a preference for Val, Ile and Met. At the P2 and P3 positions, Arg is selected most strongly with a secondary preference for other hydrophilic residues.. Functionally, serine protease that shows proteolytic activity against a non-specific substrate beta-casein. Promotes or induces cell death either by direct binding to and inhibition of BIRC proteins (also called inhibitor of apoptosis proteins, IAPs), leading to an increase in caspase activity, or by a BIRC inhibition-independent, caspase-independent and serine protease activity-dependent mechanism. Can antagonize antiapoptotic activity of th/Diap1 by directly inducing the degradation of th/Diap1. This Drosophila ananassae (Fruit fly) protein is Serine protease HTRA2, mitochondrial.